The following is a 101-amino-acid chain: MTRSKPNKNTKKYLKHNKGFYGRKKNCLKLAKQYYIKSLFKKYIDKKNKKRLILKKKIALINFFSRIYFGLSYSKFVYILKINNCKLNKNIILFLLLKTIV.

This sequence belongs to the bacterial ribosomal protein bL20 family.

In terms of biological role, binds directly to 23S ribosomal RNA and is necessary for the in vitro assembly process of the 50S ribosomal subunit. It is not involved in the protein synthesizing functions of that subunit. The protein is Large ribosomal subunit protein bL20 (rplT) of Carsonella ruddii (strain PV).